The chain runs to 210 residues: Ribosomal RNA small subunit methyltransferase G (210 aa).

S-adenosyl-L-methionine-binding positions include Gly80, Leu85, 131–132, and Arg146; that span reads VE.

It belongs to the methyltransferase superfamily. RNA methyltransferase RsmG family.

The protein localises to the cytoplasm. The catalysed reaction is guanosine(527) in 16S rRNA + S-adenosyl-L-methionine = N(7)-methylguanosine(527) in 16S rRNA + S-adenosyl-L-homocysteine. In terms of biological role, specifically methylates the N7 position of guanine in position 527 of 16S rRNA. This chain is Ribosomal RNA small subunit methyltransferase G, found in Pasteurella multocida (strain Pm70).